A 187-amino-acid chain; its full sequence is Orotate phosphoribosyltransferase (187 aa).

Residues arginine 98, lysine 99, lysine 102, histidine 104, and glutamate 128–serine 136 contribute to the 5-phospho-alpha-D-ribose 1-diphosphate site. Orotate-binding residues include threonine 132 and arginine 160.

This sequence belongs to the purine/pyrimidine phosphoribosyltransferase family. PyrE subfamily. In terms of assembly, homodimer. The cofactor is Mg(2+).

It carries out the reaction orotidine 5'-phosphate + diphosphate = orotate + 5-phospho-alpha-D-ribose 1-diphosphate. It participates in pyrimidine metabolism; UMP biosynthesis via de novo pathway; UMP from orotate: step 1/2. Catalyzes the transfer of a ribosyl phosphate group from 5-phosphoribose 1-diphosphate to orotate, leading to the formation of orotidine monophosphate (OMP). The sequence is that of Orotate phosphoribosyltransferase from Rhodopseudomonas palustris (strain TIE-1).